Consider the following 245-residue polypeptide: Uridylate kinase (245 aa).

14 to 17 (KLSG) serves as a coordination point for ATP. Gly56 is a binding site for UMP. Residues Gly57 and Arg61 each contribute to the ATP site. UMP-binding positions include Asp76 and 137–144 (TGLPFFTT). ATP is bound by residues Thr164, Tyr170, and Asp173.

This sequence belongs to the UMP kinase family. As to quaternary structure, homohexamer.

It localises to the cytoplasm. The catalysed reaction is UMP + ATP = UDP + ADP. The protein operates within pyrimidine metabolism; CTP biosynthesis via de novo pathway; UDP from UMP (UMPK route): step 1/1. Inhibited by UTP. Its function is as follows. Catalyzes the reversible phosphorylation of UMP to UDP. In Syntrophobacter fumaroxidans (strain DSM 10017 / MPOB), this protein is Uridylate kinase.